The chain runs to 159 residues: Putative 4-hydroxy-4-methyl-2-oxoglutarate aldolase (159 aa).

Residues 78-81 and Arg-100 each bind substrate; that span reads GDVI. An a divalent metal cation-binding site is contributed by Asp-101.

Belongs to the class II aldolase/RraA-like family. In terms of assembly, homotrimer. Requires a divalent metal cation as cofactor.

The enzyme catalyses 4-hydroxy-4-methyl-2-oxoglutarate = 2 pyruvate. The catalysed reaction is oxaloacetate + H(+) = pyruvate + CO2. Catalyzes the aldol cleavage of 4-hydroxy-4-methyl-2-oxoglutarate (HMG) into 2 molecules of pyruvate. Also contains a secondary oxaloacetate (OAA) decarboxylase activity due to the common pyruvate enolate transition state formed following C-C bond cleavage in the retro-aldol and decarboxylation reactions. This chain is Putative 4-hydroxy-4-methyl-2-oxoglutarate aldolase, found in Mycobacterium sp. (strain JLS).